The primary structure comprises 54 residues: Putative ankyrin repeat protein RC0701 (54 aa).

The ANK repeat unit spans residues 17-46 (SGKTPLDWYSDYNATKIVETLIKNGGNVSS).

The sequence is that of Putative ankyrin repeat protein RC0701 from Rickettsia conorii (strain ATCC VR-613 / Malish 7).